The following is a 430-amino-acid chain: Cholecystokinin receptor type A (430 aa).

The Extracellular portion of the chain corresponds to 1–41 (MDVVDSLFVNGSNITSACELGFENETLFCLDRPRPSKEWQP). Asn10, Asn13, and Asn24 each carry an N-linked (GlcNAc...) asparagine glycan. Cys18 and Cys29 form a disulfide bridge. A helical membrane pass occupies residues 42–67 (AVQILLYSLIFLLSVLGNTLVITVLI). Topologically, residues 68–77 (RNKRMRTVTN) are cytoplasmic. The helical transmembrane segment at 78–104 (IFLLSLAVSDLMLCLFCMPFNLIPSLL) threads the bilayer. The Extracellular segment spans residues 105–115 (KDFIFGSAVCK). Cys114 and Cys196 are oxidised to a cystine. A helical transmembrane segment spans residues 116–137 (TTTYFMGTSVSVSTFNLVAISL). The Cytoplasmic portion of the chain corresponds to 138 to 157 (ERYGAICKPLQSRVWQTKSH). Residues 158-178 (ALKVIAATWCLSFTIMTPYPI) form a helical membrane-spanning segment. The Extracellular segment spans residues 179-210 (YSNLVPFTKNNNQTGNMCRFLLPNDVMQQTWH). Residue Asn190 is glycosylated (N-linked (GlcNAc...) asparagine). Residues 211–234 (TFLLLILFLIPGIVMMVAYGLISL) traverse the membrane as a helical segment. The Cytoplasmic segment spans residues 235-315 (ELYQGIKFDA…NLMAKKRVIR (81 aa)). Residues 316 to 336 (MLIVIVVLFFLCWMPIFSANA) form a helical membrane-spanning segment. Residues 337–351 (WRAYDTVSAERHLSG) are Extracellular-facing. A helical transmembrane segment spans residues 352–375 (TPISFILLLSYTSSCVNPIIYCFM). Over 376–430 (NKRFRLGFMATFPCCPNPGTPGVRGEMGEEEEGRTTGASLSRYSYSHMSTSAPPP) the chain is Cytoplasmic. The S-palmitoyl cysteine moiety is linked to residue Cys389. The disordered stretch occupies residues 396–430 (PGVRGEMGEEEEGRTTGASLSRYSYSHMSTSAPPP). Polar residues predominate over residues 413 to 430 (ASLSRYSYSHMSTSAPPP).

Belongs to the G-protein coupled receptor 1 family.

It localises to the cell membrane. Its function is as follows. Receptor for cholecystokinin. Mediates pancreatic growth and enzyme secretion, smooth muscle contraction of the gall bladder and stomach. Has a 1000-fold higher affinity for CCK rather than for gastrin. It modulates feeding and dopamine-induced behavior in the central and peripheral nervous system. This receptor mediates its action by association with G proteins that activate a phosphatidylinositol-calcium second messenger system. In Cavia porcellus (Guinea pig), this protein is Cholecystokinin receptor type A (CCKAR).